A 1342-amino-acid polypeptide reads, in one-letter code: DNA-directed RNA polymerase subunit beta (1342 aa).

This sequence belongs to the RNA polymerase beta chain family. The RNAP catalytic core consists of 2 alpha, 1 beta, 1 beta' and 1 omega subunit. When a sigma factor is associated with the core the holoenzyme is formed, which can initiate transcription.

It carries out the reaction RNA(n) + a ribonucleoside 5'-triphosphate = RNA(n+1) + diphosphate. Its function is as follows. DNA-dependent RNA polymerase catalyzes the transcription of DNA into RNA using the four ribonucleoside triphosphates as substrates. This chain is DNA-directed RNA polymerase subunit beta, found in Serratia proteamaculans (strain 568).